The chain runs to 337 residues: MQKSLITKWLCINCIMVIATIVIGGITRLTGSGLSIVEWRPVTGILPPFSFESWQSEFAKYKAFPEYNSVNYGITLSQFKFIYLLEFIHRLLGRITALIYIVPVIYFYFKDVIKNRDMLPYIIALLLFCVQGFIGWYMVKSGLLNSPYVSHFRLAFHLIIAVIIYHILFYQLIKNRCDILLIPSQTDFKLPLIFSGIAITVVYVQIFLGALVAGLDAGLIYNSFPLMDDRFIPMEIKDNFFDLKNWYDPVFIQFIHRLVGYSVFLVVVVLIICLLKIEHPKLNKIAYFLMIALFMQVSTGIITLLYSVPIIIASIHQLFAIILLSVIIWCYFLIKSF.

A run of 5 helical transmembrane segments spans residues Ile6–Ile26, Phe87–Phe107, Leu119–Val139, Leu154–Lys174, and Leu192–Val212. Heme is bound at residue His256. Helical transmembrane passes span Leu258–Glu278, Ile285–Leu305, and Val308–Ile328. His316 is a binding site for heme.

This sequence belongs to the COX15/CtaA family. Type 2 subfamily. As to quaternary structure, interacts with CtaB. It depends on heme b as a cofactor.

The protein resides in the cell membrane. It carries out the reaction Fe(II)-heme o + 2 A + H2O = Fe(II)-heme a + 2 AH2. The protein operates within porphyrin-containing compound metabolism; heme A biosynthesis; heme A from heme O: step 1/1. Catalyzes the conversion of heme O to heme A by two successive hydroxylations of the methyl group at C8. The first hydroxylation forms heme I, the second hydroxylation results in an unstable dihydroxymethyl group, which spontaneously dehydrates, resulting in the formyl group of heme A. The polypeptide is Heme A synthase (Rickettsia rickettsii (strain Iowa)).